The sequence spans 149 residues: Protein SprT-like (149 aa).

In terms of domain architecture, SprT-like spans 4–143; the sequence is TDYVKQVSLE…CGLCRGKLLL (140 aa). Residue His64 participates in Zn(2+) binding. The active site involves Glu65. His68 serves as a coordination point for Zn(2+).

The protein belongs to the SprT family. Zn(2+) serves as cofactor.

Its subcellular location is the cytoplasm. The chain is Protein SprT-like from Streptococcus pneumoniae (strain JJA).